The primary structure comprises 567 residues: Interferon lambda receptor 1 (567 aa).

An N-terminal signal peptide occupies residues 1 to 22; the sequence is MSAWRIRVLATLCFLWQPRVHG. The Extracellular segment spans residues 23 to 229; it reads QLPPPQNVTL…YEGEWKFPFS (207 aa). A Fibronectin type-III domain is found at 26-121; sequence PPQNVTLLSK…KSQFKEYHLD (96 aa). An N-linked (GlcNAc...) asparagine glycan is attached at Asn-29. Cystine bridges form between Cys-74/Cys-82, Cys-86/Cys-149, and Cys-193/Cys-215. An N-linked (GlcNAc...) asparagine glycan is attached at Asn-141. The chain crosses the membrane as a helical span at residues 230–250; it reads ATIPVFVLLILLTSASIIWLL. Residues 251–567 lie on the Cytoplasmic side of the membrane; sequence KQDAKHKKMP…YQHSHYMRRS (317 aa).

Belongs to the type II cytokine receptor family. In terms of assembly, heterodimer with IL10RB.

It is found in the membrane. Its function is as follows. The IFNLR1/IL10RB dimer is a receptor for the cytokine ligands IFNL2 and IFNL3 and mediates their antiviral activity. The ligand/receptor complex stimulate the activation of the JAK/STAT signaling pathway leading to the expression of IFN-stimulated genes (ISG), which contribute to the antiviral state. Determines the cell type specificity of the lambda interferon action. Shows a more restricted pattern of expression in the epithelial tissues thereby limiting responses to lambda interferons primarily to epithelial cells of the respiratory, gastrointestinal, and reproductive tracts. The chain is Interferon lambda receptor 1 (IFNLR1) from Gallus gallus (Chicken).